Consider the following 1127-residue polypeptide: Testis-expressed protein 2 (1127 aa).

Disordered regions lie at residues 1–27 and 133–279; these read MTSL…HVQR and AVSP…SFFK. A compositionally biased stretch (low complexity) spans 133-187; it reads AVSPGSSSSGPLASSPSVSSLSEQKTSSSSPLSSPSKSPILSSSASTSTLSSAKP. Ser196 carries the post-translational modification Phosphoserine. Residues 249-275 are compositionally biased toward polar residues; the sequence is QFTQPRNTGGDSKTAPSSPLTSPSDTR. A Phosphothreonine modification is found at Thr262. Ser265, Ser266, Ser270, and Ser295 each carry phosphoserine. N-linked (GlcNAc...) asparagine glycosylation occurs at Asn330. The segment at 348–386 is disordered; that stretch reads EEECDSEGDGYGSDSNIPRSDHPKSTGEPTREIELKSSQ. Over residues 366–382 the composition is skewed to basic and acidic residues; the sequence is RSDHPKSTGEPTREIEL. Transmembrane regions (helical) follow at residues 475–495 and 497–517; these read TLGF…PHYV and GLFL…WFFT. Disordered stretches follow at residues 648–685, 715–764, 786–816, and 947–980; these read KAQT…QRDQ, KKSS…QKEL, QESR…PPSE, and DEES…GYVG. A compositionally biased stretch (basic and acidic residues) spans 650–670; that stretch reads QTDKETSEEKPPAEGSEDPKK. A phosphoserine mark is found at Ser732, Ser738, Ser744, Ser748, Ser751, Ser798, and Ser815. The segment covering 735 to 750 has biased composition (polar residues); it reads NSPSGHLTHSRSSSKG. The span at 787–804 shows a compositional bias: polar residues; it reads ESRSPQRSPLQSAESSPT. One can recognise an SMP-LTD domain in the interval 816–1101; sequence EEEEQEAWVN…MPNMDDVYIT (286 aa). Positions 947–962 are enriched in acidic residues; that stretch reads DEESSSAGSSEEDDAP.

Its subcellular location is the endoplasmic reticulum membrane. It localises to the nucleus membrane. Its function is as follows. During endoplasmic reticulum (ER) stress or when cellular ceramide levels increase, may induce contacts between the ER and medial-Golgi complex to facilitate non-vesicular transport of ceramides from the ER to the Golgi complex where they are converted to complex sphingolipids, preventing toxic ceramide accumulation. The chain is Testis-expressed protein 2 (TEX2) from Homo sapiens (Human).